The sequence spans 206 residues: Guanylyl cyclase inhibitory protein (206 aa).

The N-myristoyl glycine moiety is linked to residue Gly2. EF-hand domains lie at 31 to 49, 51 to 86, 87 to 122, and 135 to 170; these read SGLI…VTVG, NSSE…LAHG, TPED…VYKM, and TAEE…DEWV. Residues Asp64, Asn66, Asp68, Glu75, Asp100, Asp102, Asp104, and Glu111 each contribute to the Ca(2+) site.

Retina; inner segments, somata and synaptic terminals of cone receptors.

Functionally, does not stimulate guanylyl cyclase (GC) when free calcium ion concentration is low, but inhibits GC when free calcium ions concentration is elevated. The protein is Guanylyl cyclase inhibitory protein (GCIP) of Lithobates pipiens (Northern leopard frog).